A 240-amino-acid chain; its full sequence is ATP-dependent dethiobiotin synthetase BioD (240 aa).

Residue 15–20 coordinates ATP; it reads EIGKTF. Thr-19 contributes to the Mg(2+) binding site. The active site involves Lys-40. Residues Asp-57, 118–121, and 178–179 contribute to the ATP site; these read EGVG and NR. Mg(2+) contacts are provided by Asp-57 and Glu-118.

Belongs to the dethiobiotin synthetase family. As to quaternary structure, homodimer. Requires Mg(2+) as cofactor.

The protein localises to the cytoplasm. The enzyme catalyses (7R,8S)-7,8-diammoniononanoate + CO2 + ATP = (4R,5S)-dethiobiotin + ADP + phosphate + 3 H(+). Its pathway is cofactor biosynthesis; biotin biosynthesis; biotin from 7,8-diaminononanoate: step 1/2. Functionally, catalyzes a mechanistically unusual reaction, the ATP-dependent insertion of CO2 between the N7 and N8 nitrogen atoms of 7,8-diaminopelargonic acid (DAPA, also called 7,8-diammoniononanoate) to form a ureido ring. The polypeptide is ATP-dependent dethiobiotin synthetase BioD (Burkholderia thailandensis (strain ATCC 700388 / DSM 13276 / CCUG 48851 / CIP 106301 / E264)).